The chain runs to 142 residues: Large ribosomal subunit protein uL13 (142 aa).

The protein belongs to the universal ribosomal protein uL13 family. As to quaternary structure, part of the 50S ribosomal subunit.

In terms of biological role, this protein is one of the early assembly proteins of the 50S ribosomal subunit, although it is not seen to bind rRNA by itself. It is important during the early stages of 50S assembly. In Baumannia cicadellinicola subsp. Homalodisca coagulata, this protein is Large ribosomal subunit protein uL13.